The primary structure comprises 536 residues: Glutamyl-tRNA(Gln) amidotransferase subunit B, mitochondrial (536 aa).

The protein belongs to the GatB/GatE family. GatB subfamily. As to quaternary structure, subunit of the heterotrimeric GatFAB amidotransferase (AdT) complex, composed of A, B and F subunits.

It localises to the mitochondrion. It catalyses the reaction L-glutamyl-tRNA(Gln) + L-glutamine + ATP + H2O = L-glutaminyl-tRNA(Gln) + L-glutamate + ADP + phosphate + H(+). Functionally, allows the formation of correctly charged Gln-tRNA(Gln) through the transamidation of misacylated Glu-tRNA(Gln) in the mitochondria. The reaction takes place in the presence of glutamine and ATP through an activated gamma-phospho-Glu-tRNA(Gln). This is Glutamyl-tRNA(Gln) amidotransferase subunit B, mitochondrial from Vanderwaltozyma polyspora (strain ATCC 22028 / DSM 70294 / BCRC 21397 / CBS 2163 / NBRC 10782 / NRRL Y-8283 / UCD 57-17) (Kluyveromyces polysporus).